Here is a 291-residue protein sequence, read N- to C-terminus: Meteorin (291 aa).

Positions 1-21 (MLVAALLCALCCGLLAASARA) are cleaved as a signal peptide. Intrachain disulfides connect C28-C49, C80-C116, C169-C240, C172-C264, and C182-C286.

It belongs to the meteorin family. In terms of assembly, monomer.

It is found in the secreted. Its function is as follows. Involved in both glial cell differentiation and axonal network formation during neurogenesis. Promotes astrocyte differentiation and transforms cerebellar astrocytes into radial glia. Also induces axonal extension in small and intermediate neurons of sensory ganglia by activating nearby satellite glia. This Rattus norvegicus (Rat) protein is Meteorin (Metrn).